The sequence spans 196 residues: Agamous-like MADS-box protein AGL70 (196 aa).

The 61-residue stretch at 1-61 (MGRRKVEIKR…GKLYDSASGD (61 aa)) folds into the MADS-box domain. The short motif at 8 to 15 (IKRIENKS) is the Nuclear localization signal element. The region spanning 80-170 (ALDLAEKIRN…ASQVGKKTFL (91 aa)) is the K-box domain.

As to expression, mostly expressed in roots, leaves and flowers, and, to a lower extent, in inflorescence, siliques, pollen and shoots.

It is found in the nucleus. In terms of biological role, probable transcription factor involved in the negative regulation of flowering time, probably through the photoperiodic and vernalization pathways; more efficient in cv. Landsberg erecta than in cv. Columbia background. Prevents premature flowering. Involved in the modulation of vernalization impact on flowering according to genotype acclimation to altitude. The sequence is that of Agamous-like MADS-box protein AGL70 from Arabidopsis thaliana (Mouse-ear cress).